Here is a 302-residue protein sequence, read N- to C-terminus: Acetaldehyde dehydrogenase (302 aa).

Catalysis depends on Cys131, which acts as the Acyl-thioester intermediate. NAD(+) contacts are provided by residues 162 to 170 (SAGPGTRKN) and Asn273.

The protein belongs to the acetaldehyde dehydrogenase family.

It catalyses the reaction acetaldehyde + NAD(+) + CoA = acetyl-CoA + NADH + H(+). This chain is Acetaldehyde dehydrogenase, found in Acidovorax sp. (strain JS42).